A 122-amino-acid chain; its full sequence is Large ribosomal subunit protein bL17 (122 aa).

This sequence belongs to the bacterial ribosomal protein bL17 family. Part of the 50S ribosomal subunit. Contacts protein L32.

The protein is Large ribosomal subunit protein bL17 of Nautilia profundicola (strain ATCC BAA-1463 / DSM 18972 / AmH).